The chain runs to 101 residues: MFIKKNDKVKVIAGKDKGKEGTVEKVFPAQDRVIVKGINIVKKHQKPTNANPNGGIVEVEAPIHVSNVMLIDPSNNEATRVGFKVVDGKKVRVSKKSGEIL.

Belongs to the universal ribosomal protein uL24 family. Part of the 50S ribosomal subunit.

Its function is as follows. One of two assembly initiator proteins, it binds directly to the 5'-end of the 23S rRNA, where it nucleates assembly of the 50S subunit. One of the proteins that surrounds the polypeptide exit tunnel on the outside of the subunit. The protein is Large ribosomal subunit protein uL24 of Ligilactobacillus salivarius (strain UCC118) (Lactobacillus salivarius).